A 209-amino-acid chain; its full sequence is N-(5'-phosphoribosyl)anthranilate isomerase (209 aa).

The protein belongs to the TrpF family.

The enzyme catalyses N-(5-phospho-beta-D-ribosyl)anthranilate = 1-(2-carboxyphenylamino)-1-deoxy-D-ribulose 5-phosphate. The protein operates within amino-acid biosynthesis; L-tryptophan biosynthesis; L-tryptophan from chorismate: step 3/5. The polypeptide is N-(5'-phosphoribosyl)anthranilate isomerase (Pelobacter propionicus (strain DSM 2379 / NBRC 103807 / OttBd1)).